Here is a 230-residue protein sequence, read N- to C-terminus: Large ribosomal subunit protein uL1 (230 aa).

The protein belongs to the universal ribosomal protein uL1 family. Part of the 50S ribosomal subunit.

Binds directly to 23S rRNA. The L1 stalk is quite mobile in the ribosome, and is involved in E site tRNA release. In terms of biological role, protein L1 is also a translational repressor protein, it controls the translation of the L11 operon by binding to its mRNA. The protein is Large ribosomal subunit protein uL1 of Bradyrhizobium sp. (strain ORS 278).